The following is a 323-amino-acid chain: Glyoxylate/hydroxypyruvate reductase HPR3 (323 aa).

NADP(+) contacts are provided by residues 160–163 (LGSI), 182–184 (SRS), and 238–240 (VGR). Active-site residues include arginine 240 and glutamate 269. Histidine 287 acts as the Proton donor in catalysis. An NADP(+)-binding site is contributed by 287 to 289 (HFA).

Belongs to the D-isomer specific 2-hydroxyacid dehydrogenase family. GyaR subfamily. Homodimer.

The catalysed reaction is glycolate + NADP(+) = glyoxylate + NADPH + H(+). It catalyses the reaction (R)-glycerate + NADP(+) = 3-hydroxypyruvate + NADPH + H(+). Its activity is regulated as follows. Inhibited by oxalate. Functionally, catalyzes the NADPH-dependent reduction of glyoxylate and hydroxypyruvate (HP) into glycolate and glycerate. Mostly active in the presence of NADPH and glyoxylate. The protein is Glyoxylate/hydroxypyruvate reductase HPR3 (HPR3) of Arabidopsis thaliana (Mouse-ear cress).